The sequence spans 72 residues: Small ribosomal subunit protein bS18 (72 aa).

It belongs to the bacterial ribosomal protein bS18 family. As to quaternary structure, part of the 30S ribosomal subunit. Forms a tight heterodimer with protein bS6.

Its function is as follows. Binds as a heterodimer with protein bS6 to the central domain of the 16S rRNA, where it helps stabilize the platform of the 30S subunit. The protein is Small ribosomal subunit protein bS18 of Trichodesmium erythraeum (strain IMS101).